Consider the following 137-residue polypeptide: Phosphoribosyl-AMP cyclohydrolase (137 aa).

A Mg(2+)-binding site is contributed by aspartate 84. Cysteine 85 lines the Zn(2+) pocket. Aspartate 86 and aspartate 88 together coordinate Mg(2+). Positions 101 and 108 each coordinate Zn(2+).

This sequence belongs to the PRA-CH family. In terms of assembly, homodimer. The cofactor is Mg(2+). It depends on Zn(2+) as a cofactor.

It localises to the cytoplasm. The enzyme catalyses 1-(5-phospho-beta-D-ribosyl)-5'-AMP + H2O = 1-(5-phospho-beta-D-ribosyl)-5-[(5-phospho-beta-D-ribosylamino)methylideneamino]imidazole-4-carboxamide. It participates in amino-acid biosynthesis; L-histidine biosynthesis; L-histidine from 5-phospho-alpha-D-ribose 1-diphosphate: step 3/9. Its function is as follows. Catalyzes the hydrolysis of the adenine ring of phosphoribosyl-AMP. This Chlorobaculum tepidum (strain ATCC 49652 / DSM 12025 / NBRC 103806 / TLS) (Chlorobium tepidum) protein is Phosphoribosyl-AMP cyclohydrolase.